Here is a 63-residue protein sequence, read N- to C-terminus: Conotoxin Vi5.1b (63 aa).

Positions 1–22 (MLCVPVFIILFIIIPFAPTSES) are cleaved as a signal peptide. Residues 23-50 (QPKTKEEVAKASVHDNAERTLQRLWNQS) constitute a propeptide that is removed on maturation. A Proline amide modification is found at proline 62.

This sequence belongs to the conotoxin T superfamily. Contains 2 disulfide bonds that can be either 'C1-C3, C2-C4' or 'C1-C4, C2-C3', since these disulfide connectivities have been observed for conotoxins with cysteine framework V (for examples, see AC P0DQQ7 and AC P81755). In terms of tissue distribution, expressed by the venom duct.

It is found in the secreted. In Conus virgo (Virgin cone), this protein is Conotoxin Vi5.1b.